The primary structure comprises 1525 residues: Multidrug resistance-associated protein 1 (1525 aa).

Over 1–33 (MGIESLCSADASEPFWDWNLTWHTENPDFTQCF) the chain is Extracellular. A helical membrane pass occupies residues 34 to 54 (QNTVLVWVPCIYLWVCFPAYF). Residues 55-74 (LYLRSHDRGYIQMSILNKAK) are Cytoplasmic-facing. The chain crosses the membrane as a helical span at residues 75–95 (TALGLILWIVCWADLFYSFWE). Residues 96–100 (RSQNI) are Extracellular-facing. Residues 101–121 (FRAPFFLISPTVLGITMLLAT) traverse the membrane as a helical segment. At 122–133 (FLIQHERLKGVQ) the chain is on the cytoplasmic side. Residues 134 to 154 (SSGVMMIFWLISLLCATVIFR) traverse the membrane as a helical segment. The Extracellular segment spans residues 155 to 172 (SKIMLALNTDTEVDAFRY). The helical transmembrane segment at 173 to 193 (VTFCTYFILLLVQLILSCFPE) threads the bilayer. Over 194–315 (KPPLFSEAVN…RSSEASLSKV (122 aa)) the chain is Cytoplasmic. A helical transmembrane segment spans residues 316-336 (LYKTFGPYFLMSFLFKAAHDL). The ABC transmembrane type-1 1 domain occupies 324-607 (FLMSFLFKAA…LPMVISSIVE (284 aa)). Topologically, residues 337-362 (LMFTGPEILKLLINFVNNKSAPNWQG) are extracellular. Residues 363–383 (YFYTGLLFVCACLQTLILHQY) form a helical membrane-spanning segment. The Cytoplasmic segment spans residues 384-439 (FHICFVTGMRLKTAIVGVIYRKALVITNSARKTSTVGEIVNLMSVDAQRFMDLATY). Residues 440-460 (INMIWSAPLQVILALYLLWRN) traverse the membrane as a helical segment. Topologically, residues 461–463 (LGP) are extracellular. The helical transmembrane segment at 464-484 (SVLAGVAVMILLVPINAVMAM) threads the bilayer. Over 485–546 (KTKTYQVAQM…VLKKSAYLAA (62 aa)) the chain is Cytoplasmic. The helical transmembrane segment at 547–567 (MGTFTWVCAPFLVALSTFAVY) threads the bilayer. The Extracellular portion of the chain corresponds to 568–589 (VKVNKNNILDAQKAFVSLALFN). Residues 590 to 610 (ILRFPLNILPMVISSIVEASV) traverse the membrane as a helical segment. The Cytoplasmic segment spans residues 611–961 (SLKRLRVFLS…VKATVYWEYM (351 aa)). Residues 641 to 865 (IVVKNATFSW…DGAFAEFLRT (225 aa)) form the ABC transporter 1 domain. An ATP-binding site is contributed by 675 to 682 (GQVGCGKS). Composition is skewed to polar residues over residues 871-882 (QSMESSDASSPS) and 908-928 (SNSS…STAE). Disordered stretches follow at residues 871 to 891 (QSME…PVEN) and 908 to 930 (SNSS…AELQ). Residues 962–982 (KAIGLYISFLSVFLFMCNHIA) traverse the membrane as a helical segment. Positions 969–1250 (SFLSVFLFMC…LVRMTSDLET (282 aa)) constitute an ABC transmembrane type-1 2 domain. Over 983–1019 (SLASNYWLSLWTDDPVVNGTQQYTNVRLGVYGALGIS) the chain is Extracellular. A helical transmembrane segment spans residues 1020-1040 (QGIAVFGYSMAVSIGGIFASR). Residues 1041 to 1083 (HLHLDLLHNVLRSPMSFFERTPSGNLVSRFSKEIDTIDSTIPP) lie on the Cytoplasmic side of the membrane. Residues 1084–1104 (IIKMFMGSTFNVIGACIIILL) traverse the membrane as a helical segment. Ala-1105 is a topological domain (extracellular). The helical transmembrane segment at 1106–1126 (TPIAAVVIPPLGLVYLLVQRF) threads the bilayer. Topologically, residues 1127–1197 (YVATSRQLKR…VANRWLAVRL (71 aa)) are cytoplasmic. Residues 1198–1218 (EFVGNCIVLFAALFAVIARNK) traverse the membrane as a helical segment. Residues 1219-1220 (LS) are Extracellular-facing. A helical transmembrane segment spans residues 1221 to 1241 (PGLIGLSVSYSLQITAYLNWL). Over 1242 to 1525 (VRMTSDLETN…YSMAKDSGLA (284 aa)) the chain is Cytoplasmic. In terms of domain architecture, ABC transporter 2 spans 1289-1521 (FRGFGLRYRE…KGLFYSMAKD (233 aa)). 1321 to 1328 (GRTGAGKS) provides a ligand contact to ATP.

It belongs to the ABC transporter superfamily. ABCC family. Conjugate transporter (TC 3.A.1.208) subfamily.

Its subcellular location is the cell membrane. It catalyses the reaction ATP + H2O + xenobioticSide 1 = ADP + phosphate + xenobioticSide 2.. It carries out the reaction an S-substituted glutathione(in) + ATP + H2O = an S-substituted glutathione(out) + ADP + phosphate + H(+). The catalysed reaction is sphing-4-enine 1-phosphate(in) + ATP + H2O = sphing-4-enine 1-phosphate(out) + ADP + phosphate + H(+). The enzyme catalyses leukotriene C4(in) + ATP + H2O = leukotriene C4(out) + ADP + phosphate + H(+). It catalyses the reaction 17beta-estradiol 17-O-(beta-D-glucuronate)(in) + ATP + H2O = 17beta-estradiol 17-O-(beta-D-glucuronate)(out) + ADP + phosphate + H(+). It carries out the reaction 2',3'-cGAMP(in) + ATP + H2O = 2',3'-cGAMP(out) + ADP + phosphate + H(+). Mediates export of organic anions and drugs from the cytoplasm. Mediates ATP-dependent transport of glutathione and glutathione conjugates, leukotriene C4, estradiol-17-beta-o-glucuronide and other xenobiotics. Hydrolyzes ATP with low efficiency. Mediates ATP-dependent, GSH-independent cyclic GMP-AMP (cGAMP) export. Thus, by limiting intracellular cGAMP concentrations negatively regulates the cGAS-STING pathway. The polypeptide is Multidrug resistance-associated protein 1 (Gallus gallus (Chicken)).